The sequence spans 292 residues: MAAAAAAAVAGVGRGGGGAEPRQERSRARGWAGVERSEGRRMEPGEELEEEGSPGGREDGFTAEHLAAEAMAADMDPWLVFDARTTPATELDAWLAKYPPSQVTRYGDPGSPNSEPVGWIAVYGQGYSPNSGDVQGLQAAWEALQTSGRPITPGTLRQLAITHHVLSGKWLMHLAPGFKLDHAWAGIARAVVEGQLQVAKVSPRAKEGGRQVICVYTDDFTDRLGVLEADSAIRAAGIKCLLTYKPDVYTYLGIYRANRWHLCPTLYESRFQLGGSARGSRVLDRANNVELT.

Over residues 1–11 the composition is skewed to low complexity; sequence MAAAAAAAVAG. A disordered region spans residues 1–60; sequence MAAAAAAAVAGVGRGGGGAEPRQERSRARGWAGVERSEGRRMEPGEELEEEGSPGGREDG. Residue arginine 29 is modified to Omega-N-methylarginine. Residues 35 to 44 show a composition bias toward basic and acidic residues; the sequence is ERSEGRRMEP.

Belongs to the UPF0696 family.

The protein is UPF0696 protein C11orf68 (C11orf68) of Homo sapiens (Human).